Reading from the N-terminus, the 1074-residue chain is Transmembrane protein 132E (1074 aa).

An N-terminal signal peptide occupies residues 1-23 (MAPGMSGRRGAALLCLSVLLAHA). Residues 26 to 894 (RSHPASPSPP…LTDLEIGMYA (869 aa)) are Extracellular-facing. N-linked (GlcNAc...) asparagine glycans are attached at residues Asn70 and Asn91. 2 disordered regions span residues 205 to 224 (PAAPPSARRKSPDGLEPEAA) and 243 to 266 (GGCGSARRGPGPGPGAAARAESPT). Positions 247 to 262 (SARRGPGPGPGAAARA) are enriched in low complexity. Residues Asn320 and Asn401 are each glycosylated (N-linked (GlcNAc...) asparagine). 2 disordered regions span residues 564-587 (RRSARESEDEEEEEEERRQSANRG) and 816-867 (GRDE…PVPP). A compositionally biased stretch (low complexity) spans 843–854 (GAGPPGTAIPAG). A helical transmembrane segment spans residues 895–915 (LLGVFCLAILVFLINCIVFVL). Over 916–1074 (RYRHKRIPPE…NYMRRIKDIA (159 aa)) the chain is Cytoplasmic. The interval 962-1064 (VPACCHGDHH…TRPTPPPDLH (103 aa)) is disordered. 2 stretches are compositionally biased toward low complexity: residues 973-985 (SGSSQTSVQSQVH) and 1016-1026 (FTTFTTLPTEE). Residues 1035 to 1044 (GEEEDEEEDL) are compositionally biased toward acidic residues.

The protein belongs to the TMEM132 family. Widely expressed, with highest levels in the cochlea. In the cochlea, detected in spiral ganglion, the organ of Corti and stria vascularis. In the organ of Corti, prominently expressed in the outer and inner hair cells, especially at the apical and basal region of the outer hair cell body (at protein level).

Its subcellular location is the membrane. In terms of biological role, required for normal inner ear hair cell function and hearing. In Mus musculus (Mouse), this protein is Transmembrane protein 132E (Tmem132e).